The chain runs to 793 residues: Endonuclease MutS2 (793 aa).

Residue 335 to 342 (GPNTGGKT) participates in ATP binding. The 76-residue stretch at 718-793 (IDVRGYNLEE…ESGVTIVELR (76 aa)) folds into the Smr domain.

Belongs to the DNA mismatch repair MutS family. MutS2 subfamily. Homodimer. Binds to stalled ribosomes, contacting rRNA.

In terms of biological role, endonuclease that is involved in the suppression of homologous recombination and thus may have a key role in the control of bacterial genetic diversity. Acts as a ribosome collision sensor, splitting the ribosome into its 2 subunits. Detects stalled/collided 70S ribosomes which it binds and splits by an ATP-hydrolysis driven conformational change. Acts upstream of the ribosome quality control system (RQC), a ribosome-associated complex that mediates the extraction of incompletely synthesized nascent chains from stalled ribosomes and their subsequent degradation. Probably generates substrates for RQC. The protein is Endonuclease MutS2 of Acetivibrio thermocellus (strain ATCC 27405 / DSM 1237 / JCM 9322 / NBRC 103400 / NCIMB 10682 / NRRL B-4536 / VPI 7372) (Clostridium thermocellum).